We begin with the raw amino-acid sequence, 206 residues long: A-type ATP synthase subunit E (206 aa).

This sequence belongs to the V-ATPase E subunit family. As to quaternary structure, has multiple subunits with at least A(3), B(3), C, D, E, F, H, I and proteolipid K(x).

It localises to the cell membrane. In terms of biological role, component of the A-type ATP synthase that produces ATP from ADP in the presence of a proton gradient across the membrane. The chain is A-type ATP synthase subunit E from Methanothermobacter thermautotrophicus (strain ATCC 29096 / DSM 1053 / JCM 10044 / NBRC 100330 / Delta H) (Methanobacterium thermoautotrophicum).